A 160-amino-acid polypeptide reads, in one-letter code: Dr hemagglutinin structural subunit (160 aa).

The N-terminal stretch at 1–21 (MKKLAIMAAASMVFAVSSAHA) is a signal peptide. The segment at 22–75 (GFTPSGTTGTTKLTVTEECQVRVGDLTVAKTRGQLTDAAPIGPVTVQALGCDAR) is receptor-binding.

It belongs to the Dr-adhesin family.

The protein resides in the fimbrium. In terms of biological role, hemagglutinins of uropathogenic E.coli mediate adherence to the upper urinary tract. These adhesins bind to the Dr blood group antigen and also agglutinate human erythrocytes in the presence of D-mannose (mannose-resistant hemagglutination (MRHA)). The polypeptide is Dr hemagglutinin structural subunit (draA) (Escherichia coli).